The following is a 413-amino-acid chain: Transmembrane protein 237B (413 aa).

A disordered region spans residues 1–162; that stretch reads MDPEAKVSSS…EDDDVITDPQ (162 aa). Polar residues predominate over residues 112–122; the sequence is DLVSNGDTLDQ. 4 helical membrane passes run 233 to 253, 274 to 294, 312 to 332, and 360 to 380; these read VIGL…IIVV, LAYP…VSAF, LSPV…SLSQ, and ILYP…LAWI.

This sequence belongs to the TMEM237 family.

The protein resides in the membrane. The protein localises to the cell projection. It localises to the cilium. Functionally, component of the transition zone in primary cilia. Required for ciliogenesis. In Danio rerio (Zebrafish), this protein is Transmembrane protein 237B (tmem237b).